Here is a 258-residue protein sequence, read N- to C-terminus: Regulatory protein RecX (258 aa).

It belongs to the RecX family.

The protein localises to the cytoplasm. Modulates RecA activity. This Streptococcus pneumoniae (strain 70585) protein is Regulatory protein RecX.